The following is a 111-amino-acid chain: Small ribosomal subunit protein uS17 (111 aa).

Belongs to the universal ribosomal protein uS17 family. Part of the 30S ribosomal subunit.

In terms of biological role, one of the primary rRNA binding proteins, it binds specifically to the 5'-end of 16S ribosomal RNA. This Archaeoglobus fulgidus (strain ATCC 49558 / DSM 4304 / JCM 9628 / NBRC 100126 / VC-16) protein is Small ribosomal subunit protein uS17.